The primary structure comprises 745 residues: Cellulose synthase-like protein E2 (745 aa).

Positions 1-14 (MAGSGGGVVSGGRQ) are enriched in gly residues. The tract at residues 1 to 20 (MAGSGGGVVSGGRQRGPPLF) is disordered. The next 2 helical transmembrane spans lie at 29-49 (AMAA…LIWL) and 66-86 (WAWL…VLTL). Catalysis depends on residues aspartate 155 and aspartate 458. Helical transmembrane passes span 541–561 (FPTL…ISLF), 568–588 (WFIP…AESL), 658–678 (AMFV…VLGI), 686–706 (GPGG…IVAI), and 723–743 (LPAS…ILSI).

Belongs to the glycosyltransferase 2 family. Plant cellulose synthase-like E subfamily.

It is found in the golgi apparatus membrane. Functionally, thought to be a Golgi-localized beta-glycan synthase that polymerize the backbones of noncellulosic polysaccharides (hemicelluloses) of plant cell wall. This Oryza sativa subsp. japonica (Rice) protein is Cellulose synthase-like protein E2 (CSLE2).